The chain runs to 365 residues: tRNA 2-selenouridine synthase (365 aa).

The 125-residue stretch at 12-136 (FLHDVPLLDV…LRMFLIDTTQ (125 aa)) folds into the Rhodanese domain. Residue Cys-95 is the S-selanylcysteine intermediate of the active site.

It belongs to the SelU family. As to quaternary structure, monomer.

It carries out the reaction 5-methylaminomethyl-2-thiouridine(34) in tRNA + selenophosphate + (2E)-geranyl diphosphate + H2O + H(+) = 5-methylaminomethyl-2-selenouridine(34) in tRNA + (2E)-thiogeraniol + phosphate + diphosphate. The enzyme catalyses 5-methylaminomethyl-2-thiouridine(34) in tRNA + (2E)-geranyl diphosphate = 5-methylaminomethyl-S-(2E)-geranyl-thiouridine(34) in tRNA + diphosphate. It catalyses the reaction 5-methylaminomethyl-S-(2E)-geranyl-thiouridine(34) in tRNA + selenophosphate + H(+) = 5-methylaminomethyl-2-(Se-phospho)selenouridine(34) in tRNA + (2E)-thiogeraniol. The catalysed reaction is 5-methylaminomethyl-2-(Se-phospho)selenouridine(34) in tRNA + H2O = 5-methylaminomethyl-2-selenouridine(34) in tRNA + phosphate. In terms of biological role, involved in the post-transcriptional modification of the uridine at the wobble position (U34) of tRNA(Lys), tRNA(Glu) and tRNA(Gln). Catalyzes the conversion of 2-thiouridine (S2U-RNA) to 2-selenouridine (Se2U-RNA). Acts in a two-step process involving geranylation of 2-thiouridine (S2U) to S-geranyl-2-thiouridine (geS2U) and subsequent selenation of the latter derivative to 2-selenouridine (Se2U) in the tRNA chain. The chain is tRNA 2-selenouridine synthase from Verminephrobacter eiseniae (strain EF01-2).